We begin with the raw amino-acid sequence, 215 residues long: Thymidylate kinase (215 aa).

Position 7 to 14 (7 to 14) interacts with ATP; the sequence is GMEGSGKS.

It belongs to the thymidylate kinase family.

The catalysed reaction is dTMP + ATP = dTDP + ADP. In terms of biological role, phosphorylation of dTMP to form dTDP in both de novo and salvage pathways of dTTP synthesis. This Nitratidesulfovibrio vulgaris (strain DSM 19637 / Miyazaki F) (Desulfovibrio vulgaris) protein is Thymidylate kinase.